The primary structure comprises 658 residues: Glycine--tRNA ligase beta subunit (658 aa).

The protein belongs to the class-II aminoacyl-tRNA synthetase family. Tetramer of two alpha and two beta subunits.

Its subcellular location is the cytoplasm. The catalysed reaction is tRNA(Gly) + glycine + ATP = glycyl-tRNA(Gly) + AMP + diphosphate. The sequence is that of Glycine--tRNA ligase beta subunit from Rickettsia bellii (strain OSU 85-389).